A 254-amino-acid chain; its full sequence is UstYa family oxidase phomYc' (254 aa).

A helical transmembrane segment spans residues 38 to 58 (LVLVLQSVLIISLLASLHILG). The N-linked (GlcNAc...) asparagine glycan is linked to Asn64. The HXXHC 1 motif lies at 138 to 142 (HQLHC). N-linked (GlcNAc...) asparagine glycosylation occurs at Asn159. The HXXHC 2 motif lies at 173 to 177 (HIDHC).

The protein belongs to the ustYa family.

The protein localises to the membrane. It participates in mycotoxin biosynthesis. UstYa family oxidase; part of the gene cluster that mediates the biosynthesis of the phomopsins, a group of hexapeptide mycotoxins which infects lupins and causes lupinosis disease in livestock. Within the pathway, phomYc' catalyzes the desaturation of the Ile moiety into 2,3-dehydroisoleucine (dIle). The pathway starts with the processing of the precursor phomA' by several endopeptidases including kexin proteases as well as the cluster-specific S41 family peptidase phomP1 and the oligopeptidase phomG' to produce 10 identical copies of the hexapeptide Tyr-Val-Ile-Pro-Ile-Asp. After being excised from the precursor peptide, the core peptides are cyclized and modified post-translationally by enzymes encoded within the gene cluster. The timing and order of proteolysis of the phomA' precursor and PTMs are still unknown. Two tyrosinase-like enzymes, phomQ1' and phomQ2, catalyze the chlorination and hydroxylation of Tyr, respectively. PhomYb, is proposed to be involved in the construction of the macrocyclic structure. The other 4 ustYa family proteins may be involved in PTMs that generate the unique structure of phomopsin A. PhomYa' is required for the hydroxylation of C-beta of Tyr. PhomYc', phomYd', and phomYe are responsible for the biosynthesis of 2,3-dehydroisoleucine (dIle), 2,3-dehydroaspartic acid (dAsp), and 3,4-dehydroproline (dPro), respectively. While dIle formation by phomYc' is indispensable for the installation of dAsp by phomYd', the order of the other PTMs have not been elucidated yet. Most of the biosynthetic enzymes likely have broad substrate specificity, and thus, there might be a metabolic grid from a precursor to phomopsin A. The enzyme(s) responsible for the biosynthesis of 3,4-dehydrovaline (dVal) have also not been identified yet. Finally, phomM' acts as an S-adenosylmethionine-dependent alpha-N-methyltransferase that catalyzes two successive N-methylation reactions, converting N-desmethyl-phomopsin A to phomopsin A and phomopsin A further to an N,N-dimethylated congener called phomopsin E. The sequence is that of UstYa family oxidase phomYc' from Diaporthe leptostromiformis (Lupinosis disease fungus).